The sequence spans 136 residues: Small ribosomal subunit protein uS8c (136 aa).

It belongs to the universal ribosomal protein uS8 family. In terms of assembly, part of the 30S ribosomal subunit.

The protein localises to the plastid. It localises to the chloroplast. Functionally, one of the primary rRNA binding proteins, it binds directly to 16S rRNA central domain where it helps coordinate assembly of the platform of the 30S subunit. This Morus indica (Mulberry) protein is Small ribosomal subunit protein uS8c (rps8).